Here is a 232-residue protein sequence, read N- to C-terminus: Peroxiredoxin (232 aa).

The region spanning 6–161 is the Thioredoxin domain; sequence PSIGEKFPEI…ILRLIESLQI (156 aa). Residue C48 is the Cysteine sulfenic acid (-SOH) intermediate of the active site. Residue R124 participates in substrate binding. C203 and C209 are disulfide-bonded.

It belongs to the peroxiredoxin family. Prx6 subfamily. In terms of assembly, homodecamer. Pentamer of dimers that assemble into a ring structure.

It localises to the cytoplasm. The enzyme catalyses a hydroperoxide + [thioredoxin]-dithiol = an alcohol + [thioredoxin]-disulfide + H2O. Thiol-specific peroxidase that catalyzes the reduction of hydrogen peroxide and organic hydroperoxides to water and alcohols, respectively. Plays a role in cell protection against oxidative stress by detoxifying peroxides. In Hyperthermus butylicus (strain DSM 5456 / JCM 9403 / PLM1-5), this protein is Peroxiredoxin.